The following is a 254-amino-acid chain: Nodulation protein J (254 aa).

Transmembrane regions (helical) follow at residues 25-45 (ASVLGSVIDPLIMLFGLGVGL), 60-80 (FLACGLILTSAMSASNYEMLY), 106-126 (LIGEVLWAAYEGVVAGTIVAV), 133-153 (YIPGWSVIYILPDILFVALIF), 169-189 (LFAFYQSIAIAPLVFLSGVIV), and 230-250 (LLLSLLYASVMVFISAKVICV). An ABC transmembrane type-2 domain is found at 25-251 (ASVLGSVIDP…FISAKVICVR (227 aa)).

The protein belongs to the ABC-2 integral membrane protein family. Lipooligosaccharide exporter (TC 3.A.1.102) subfamily. As to quaternary structure, the complex is composed of two ATP-binding proteins (NodI) and two transmembrane proteins (NodJ).

The protein localises to the cell inner membrane. In terms of biological role, part of the ABC transporter complex NodIJ involved in the export of the nodulation factors (Nod factors), the bacterial signal molecules that induce symbiosis and subsequent nodulation induction. Nod factors are LCO (lipo-chitin oligosaccharide), a modified beta-1,4-linked N-acetylglucosamine oligosaccharide. This subunit encodes the transporter. This Azorhizobium caulinodans (strain ATCC 43989 / DSM 5975 / JCM 20966 / LMG 6465 / NBRC 14845 / NCIMB 13405 / ORS 571) protein is Nodulation protein J (nodJ).